Reading from the N-terminus, the 198-residue chain is TYIEVAVVADHRMFKKYNSNLNTIRKWVHEMVNSMNGVYRSMDVHLSLANLEVWSKKDLINVQKDSRETLKSFGEWRERDLLPRISHDNAQLLTAIVFDQQTIGRAYIGGMCDPRHSVGVVMDHSKINLQVAVTMAHELGHNLGMEHDENQCHCDAPSCVMXXXXXXXXXXXXXXCXXXXXXXXXTKHNPQCILNEPL.

One can recognise a Peptidase M12B domain in the interval 1-197; sequence TYIEVAVVAD…HNPQCILNEP (197 aa). The Ca(2+) site is built by E4 and D88. Disulfide bonds link C112-C192, C152-C176, and C154-C159. H137 lines the Zn(2+) pocket. Residue E138 is part of the active site. Zn(2+) contacts are provided by H141 and H147. The Ca(2+) site is built by C192 and N195.

This sequence belongs to the venom metalloproteinase (M12B) family. P-I subfamily. Monomer. The cofactor is Zn(2+). In terms of tissue distribution, expressed by the venom gland.

The protein localises to the secreted. Inhibited by the chelating agents EDTA, EGTA and 1,10-phenanthroline. Is not inhibited by serine proteinase inhibitors aprotinin, leupeptin and benzamidine. Functionally, zinc metalloprotease that preferentially degrades Aalpha chain of fibrinogen (FGA) (at a dose of 5 ug, whereas at a dose of 10 ug, both FGA and FGB are completely degraded). Degrades fibrin gel in a dose-dependent manner, as well blood clots formed in vitro (thrombolytic activity). Induces hemorrhage (in the dorsal skin of mice), with an MHD of 50 ug. The basal membrane components collagen (all chains of type IV) (COL4A4), fibronectin (FN1), laminin and nidogen are all degraded by this toxin. The chain is Snake venom metalloproteinase BpirMP from Bothrops pirajai (Piraja's lancehead).